The sequence spans 336 residues: Palmitoyltransferase SWF1 (336 aa).

Over 1-2 the chain is Lumenal; sequence MS. The chain crosses the membrane as a helical span at residues 3-23; sequence WNLLFVLLIGFVVLILLSPVF. At 24 to 50 the chain is on the cytoplasmic side; it reads KSTWPFSTFYRNVFQPFLVDDQKYRWK. The chain crosses the membrane as a helical span at residues 51-71; sequence LHLVPLFYTSIYLYLVYTYHM. Over 72-86 the chain is Lumenal; it reads RVESTIKNELFLLER. Residues 87-107 traverse the membrane as a helical segment; sequence ILIVPIIILPPVALGILAMVS. Topologically, residues 108 to 179 are cytoplasmic; it reads RAEDSKDHKS…CIGKGNYLQF (72 aa). The region spanning 134 to 184 is the DHHC domain; it reads IKCSTCRIVKPARSKHCSICNRCVLVADHHCIWINNCIGKGNYLQFYLFLI. Residues 180 to 200 traverse the membrane as a helical segment; that stretch reads YLFLISNIFSMCYAFLRLWYI. At 201-216 the chain is on the lumenal side; that stretch reads SLNSTSTLPRAVLTLT. Residues 217–237 traverse the membrane as a helical segment; that stretch reads ILCGCFTIICAIFTYLQLAIV. Residues 238-336 lie on the Cytoplasmic side of the membrane; that stretch reads KEGMTTNEQD…TFLANLTDLI (99 aa).

It belongs to the DHHC palmitoyltransferase family. SWF1 subfamily.

Its subcellular location is the endoplasmic reticulum membrane. It catalyses the reaction L-cysteinyl-[protein] + hexadecanoyl-CoA = S-hexadecanoyl-L-cysteinyl-[protein] + CoA. Palmitoyltransferase that targets several endosomal SNAREs. Palmitoylates the SNAREs SNC1, SNC2, SYN8 and TLG1, at cysteine residues close to the cytoplasmic end of their transmembrane domain. May have a role in the cellular quality control of transmembrane domain-containing proteins. The polypeptide is Palmitoyltransferase SWF1 (SWF1) (Saccharomyces cerevisiae (strain ATCC 204508 / S288c) (Baker's yeast)).